The chain runs to 154 residues: Basic phospholipase A2 PC20 (154 aa).

The first 21 residues, 1 to 21 (MYPAHLLVLLAVCVSLLGASA), serve as a signal peptide directing secretion. Positions 22–27 (ISPRPL) are excised as a propeptide. 7 cysteine pairs are disulfide-bonded: C38–C98, C54–C143, C56–C72, C71–C125, C78–C118, C87–C111, and C105–C116. Positions 55, 57, and 59 each coordinate Ca(2+). H75 is an active-site residue. Position 76 (D76) interacts with Ca(2+). D119 is a catalytic residue.

Belongs to the phospholipase A2 family. Group I subfamily. D49 sub-subfamily. Ca(2+) is required as a cofactor. In terms of tissue distribution, expressed by the venom gland.

The protein localises to the secreted. It carries out the reaction a 1,2-diacyl-sn-glycero-3-phosphocholine + H2O = a 1-acyl-sn-glycero-3-phosphocholine + a fatty acid + H(+). Its function is as follows. Snake venom phospholipase A2 (PLA2) that inhibits neuromuscular transmission by blocking acetylcholine release from the nerve termini. PLA2 catalyzes the calcium-dependent hydrolysis of the 2-acyl groups in 3-sn-phosphoglycerides. The chain is Basic phospholipase A2 PC20 from Laticauda colubrina (Yellow-lipped sea krait).